Here is a 264-residue protein sequence, read N- to C-terminus: 3-methyl-2-oxobutanoate hydroxymethyltransferase (264 aa).

Residues D45 and D84 each contribute to the Mg(2+) site. Residues 45–46 (DS), D84, and K112 each bind 3-methyl-2-oxobutanoate. E114 contributes to the Mg(2+) binding site. E181 functions as the Proton acceptor in the catalytic mechanism.

Belongs to the PanB family. As to quaternary structure, homodecamer; pentamer of dimers. Mg(2+) serves as cofactor.

It localises to the cytoplasm. It carries out the reaction 3-methyl-2-oxobutanoate + (6R)-5,10-methylene-5,6,7,8-tetrahydrofolate + H2O = 2-dehydropantoate + (6S)-5,6,7,8-tetrahydrofolate. It participates in cofactor biosynthesis; (R)-pantothenate biosynthesis; (R)-pantoate from 3-methyl-2-oxobutanoate: step 1/2. Catalyzes the reversible reaction in which hydroxymethyl group from 5,10-methylenetetrahydrofolate is transferred onto alpha-ketoisovalerate to form ketopantoate. The protein is 3-methyl-2-oxobutanoate hydroxymethyltransferase of Escherichia coli O127:H6 (strain E2348/69 / EPEC).